Consider the following 96-residue polypeptide: Large ribosomal subunit protein eL43 (96 aa).

Cys41, Cys44, Cys59, and Cys62 together coordinate Zn(2+). The C4-type zinc-finger motif lies at 41–62 (CPVCAFPKLKRAGTSIWVCEKC).

Belongs to the eukaryotic ribosomal protein eL43 family. Putative zinc-binding subfamily. As to quaternary structure, part of the 50S ribosomal subunit. Zn(2+) serves as cofactor.

Functionally, binds to the 23S rRNA. The sequence is that of Large ribosomal subunit protein eL43 from Methanococcus maripaludis (strain DSM 14266 / JCM 13030 / NBRC 101832 / S2 / LL).